The following is a 581-amino-acid chain: NADH-quinone oxidoreductase subunit C/D (581 aa).

The NADH dehydrogenase I subunit C stretch occupies residues 1–172; it reads MSAFELVTEL…PLFNMTASLF (172 aa). The interval 196–581 is NADH dehydrogenase I subunit D; that stretch reads ELMILNYGPH…IDYVMSDVDR (386 aa).

This sequence in the N-terminal section; belongs to the complex I 30 kDa subunit family. The protein in the C-terminal section; belongs to the complex I 49 kDa subunit family. In terms of assembly, NDH-1 is composed of 13 different subunits. Subunits NuoB, CD, E, F, and G constitute the peripheral sector of the complex.

It localises to the cell inner membrane. The catalysed reaction is a quinone + NADH + 5 H(+)(in) = a quinol + NAD(+) + 4 H(+)(out). NDH-1 shuttles electrons from NADH, via FMN and iron-sulfur (Fe-S) centers, to quinones in the respiratory chain. The immediate electron acceptor for the enzyme in this species is believed to be ubiquinone. Couples the redox reaction to proton translocation (for every two electrons transferred, four hydrogen ions are translocated across the cytoplasmic membrane), and thus conserves the redox energy in a proton gradient. This chain is NADH-quinone oxidoreductase subunit C/D, found in Rhodopseudomonas palustris (strain ATCC BAA-98 / CGA009).